The following is a 495-amino-acid chain: Dipeptide and tripeptide permease B (495 aa).

Over 1-16 (MDNKVSILNQPKPFKM) the chain is Cytoplasmic. Residues 17 to 37 (IFFIELWERFGYYGLQGILAV) form a helical membrane-spanning segment. The Periplasmic segment spans residues 38-50 (YFVDKLGFSMQDS). The chain crosses the membrane as a helical span at residues 51 to 71 (FVTFGAFAALVYGLVSVGGYV). Over 72-80 (GDYVLGTKR) the chain is Cytoplasmic. A helical transmembrane segment spans residues 81–101 (TMVFGAVVLALGYFLMGFSIL). Topologically, residues 102–104 (NPN) are periplasmic. A helical transmembrane segment spans residues 105–125 (FIYVALGAIAVGNGLFKANPS). The Cytoplasmic portion of the chain corresponds to 126–144 (SLLAKCYEKGDSRLDGAFT). A helical transmembrane segment spans residues 145-165 (LYYMSINIGSLVSLSISPVIA). At 166-170 (NNYGY) the chain is on the periplasmic side. Residues 171–191 (EYAFIICGLGLIASLFSYFSL) traverse the membrane as a helical segment. Topologically, residues 192–209 (RSTVQGIGSEPDALPLNK) are cytoplasmic. Residues 210–230 (TKALIVLIGTIASTLVCAWLL) traverse the membrane as a helical segment. Residue glutamine 231 is a topological domain, periplasmic. A helical membrane pass occupies residues 232 to 252 (NIMMANLALGLIGVGVVGFFL). Residues 253 to 265 (KETFKEVGEQRNK) lie on the Cytoplasmic side of the membrane. Residues 266 to 286 (MIVAFILMLQAIIFYVLYAQM) traverse the membrane as a helical segment. Over 287–309 (PTSLNFFAINNVHSELFGMDINP) the chain is Periplasmic. The chain crosses the membrane as a helical span at residues 310–330 (VSLQALNPFWVIFCSPILAYL). At 331 to 348 (YTYYGNQNKDLSMPGKFT) the chain is on the cytoplasmic side. The helical transmembrane segment at 349–369 (VGMFMCAFGFLSVAAAGNWFA) threads the bilayer. Over 370–373 (DQAG) the chain is Periplasmic. The helical transmembrane segment at 374 to 394 (MVSVWWMVLVYLFQSLGELMI) threads the bilayer. Residues 395-409 (SGLGLAMVASLVPQR) lie on the Cytoplasmic side of the membrane. The helical transmembrane segment at 410–430 (LMGFTMGAWFLTQAASFIIGG) threads the bilayer. At 431–454 (YVATFSATPEHLTDPLDTLPVYTE) the chain is on the periplasmic side. Residues 455-475 (LFQNIGFVTLAVAIVMAITAP) traverse the membrane as a helical segment. Residues 476-495 (KLNKMMTSSQPEDAELVEQP) lie on the Cytoplasmic side of the membrane.

The protein belongs to the major facilitator superfamily. Proton-dependent oligopeptide transporter (POT/PTR) (TC 2.A.17) family. DtpB subfamily.

It is found in the cell inner membrane. Functionally, proton-dependent permease that transports di- and tripeptides. This Aliivibrio fischeri (strain MJ11) (Vibrio fischeri) protein is Dipeptide and tripeptide permease B.